We begin with the raw amino-acid sequence, 374 residues long: Cell division protein DivIB (374 aa).

The disordered stretch occupies residues 1 to 90; sequence MWKISNENDI…EEEHFADRLP (90 aa). Over 1-103 the chain is Cytoplasmic; sequence MWKISNENDI…KTRNKRLYRR (103 aa). Positions 39-53 are enriched in basic and acidic residues; it reads YLKKQAEEAASKGEN. Polar residues predominate over residues 56-75; the sequence is AEVTITLQEQSQEEPQQHLP. Residues 104–124 form a helical membrane-spanning segment; sequence LAFILTCLGTAILVALYFVSP. Residues 125–374 lie on the Extracellular side of the membrane; sequence LSRLSEVTVS…GENQEVQQAE (250 aa). Positions 126–197 constitute a POTRA domain; that stretch reads SRLSEVTVSG…NSFKIDIQEY (72 aa). The interval 325–374 is disordered; sequence KESEETGSEVSEDSAVENQEVVDPNAGVATDGANNGTPTNGENQEVQQAE. Positions 326-339 are enriched in acidic residues; that stretch reads ESEETGSEVSEDSA. The span at 356–374 shows a compositional bias: polar residues; it reads GANNGTPTNGENQEVQQAE.

The protein belongs to the FtsQ/DivIB family. DivIB subfamily.

It is found in the cell membrane. Cell division protein that may be involved in stabilizing or promoting the assembly of the division complex. The polypeptide is Cell division protein DivIB (Enterococcus faecalis (strain 62)).